A 147-amino-acid polypeptide reads, in one-letter code: 3-dehydroquinate dehydratase (147 aa).

Tyr23 serves as the catalytic Proton acceptor. Substrate-binding residues include Asn74, His80, and Asp87. His100 (proton donor) is an active-site residue. Residues 101–102 (IS) and Arg111 each bind substrate.

The protein belongs to the type-II 3-dehydroquinase family. In terms of assembly, homododecamer.

The catalysed reaction is 3-dehydroquinate = 3-dehydroshikimate + H2O. It participates in metabolic intermediate biosynthesis; chorismate biosynthesis; chorismate from D-erythrose 4-phosphate and phosphoenolpyruvate: step 3/7. Its function is as follows. Catalyzes a trans-dehydration via an enolate intermediate. This Prochlorococcus marinus (strain MIT 9301) protein is 3-dehydroquinate dehydratase.